We begin with the raw amino-acid sequence, 539 residues long: GMP synthase [glutamine-hydrolyzing] (539 aa).

The 199-residue stretch at 4–202 (KILILDFGSQ…VLQIAGAKPD (199 aa)) folds into the Glutamine amidotransferase type-1 domain. The active-site Nucleophile is the C81. Residues H176 and E178 contribute to the active site. One can recognise a GMPS ATP-PPase domain in the interval 203 to 395 (WIMSNHIEEA…LGLPPEMVYR (193 aa)). 230-236 (SGGVDSS) contacts ATP.

Homodimer.

The enzyme catalyses XMP + L-glutamine + ATP + H2O = GMP + L-glutamate + AMP + diphosphate + 2 H(+). The protein operates within purine metabolism; GMP biosynthesis; GMP from XMP (L-Gln route): step 1/1. In terms of biological role, catalyzes the synthesis of GMP from XMP. This Burkholderia ambifaria (strain MC40-6) protein is GMP synthase [glutamine-hydrolyzing].